The following is a 274-amino-acid chain: DNA repair protein Rad1 (274 aa).

Belongs to the rad1 family. As to quaternary structure, component of the 9-1-1 checkpoint clamp complex consisting of Rad9 isoform A, Rad1 and Hus1-like; the interaction with Hus1-like is direct. Does not interact directly with Rad9; this interaction is probably mediated by Hus1-like. This complex probably also forms with Rad9 isoform B, however 9-1-1 complex containing Rad9 isoform A localizes to the nuclear periphery. As to expression, expressed in ovary.

The protein localises to the cytoplasm. Its subcellular location is the nucleus. It localises to the nucleus envelope. This Drosophila melanogaster (Fruit fly) protein is DNA repair protein Rad1.